Consider the following 302-residue polypeptide: Uroporphyrinogen-III synthase, chloroplastic (302 aa).

Residues 1 to 39 form a disordered region; that stretch reads MALSSSSHLLPFSRPPATFPRARHAGGGRGRAGATGRFI. The transit peptide at 1–50 directs the protein to the chloroplast; sequence MALSSSSHLLPFSRPPATFPRARHAGGGRGRAGATGRFIACSSPPPPDVV.

The protein belongs to the uroporphyrinogen-III synthase family.

It is found in the plastid. The protein localises to the chloroplast. The catalysed reaction is hydroxymethylbilane = uroporphyrinogen III + H2O. Its pathway is porphyrin-containing compound metabolism; protoporphyrin-IX biosynthesis; coproporphyrinogen-III from 5-aminolevulinate: step 3/4. In terms of biological role, catalyzes cyclization of the linear tetrapyrrole, hydroxymethylbilane, to the macrocyclic uroporphyrinogen III, a precursor of tetrapyrroles such as chlorophyll, heme and phycobilins. The protein is Uroporphyrinogen-III synthase, chloroplastic (UROS) of Oryza sativa subsp. japonica (Rice).